Here is a 901-residue protein sequence, read N- to C-terminus: DNA mismatch repair protein MutS (901 aa).

Residues 1 to 12 (MKYSASTSTPKS) show a composition bias toward polar residues. The interval 1-25 (MKYSASTSTPKSAQPKEEELENSLP) is disordered. 679 to 686 (GPNASGKS) lines the ATP pocket.

Belongs to the DNA mismatch repair MutS family.

This protein is involved in the repair of mismatches in DNA. It is possible that it carries out the mismatch recognition step. This protein has a weak ATPase activity. This is DNA mismatch repair protein MutS from Trichodesmium erythraeum (strain IMS101).